The chain runs to 313 residues: Foldase protein PrsA (313 aa).

An N-terminal signal peptide occupies residues 1-20 (MKKKLLAGAITLLSVATLAA). Cys-21 carries the N-palmitoyl cysteine lipid modification. The S-diacylglycerol cysteine moiety is linked to residue Cys-21. One can recognise a PpiC domain in the interval 143–241 (TPDVTAQIIR…SQYYIVKLTK (99 aa)).

It belongs to the PrsA family.

It localises to the cell membrane. The enzyme catalyses [protein]-peptidylproline (omega=180) = [protein]-peptidylproline (omega=0). Its function is as follows. Plays a major role in protein secretion by helping the post-translocational extracellular folding of several secreted proteins. In Streptococcus pneumoniae (strain ATCC BAA-255 / R6), this protein is Foldase protein PrsA.